The following is a 95-amino-acid chain: Fluoride-specific ion channel FluC 1 (95 aa).

The next 3 membrane-spanning stretches (helical) occupy residues 23–43, 49–69, and 70–90; these read LIDA…LMGW, LWGT…LLMF, and DGAY…WLLG. The Na(+) site is built by glycine 56 and threonine 59.

Belongs to the fluoride channel Fluc/FEX (TC 1.A.43) family.

It is found in the cell membrane. It catalyses the reaction fluoride(in) = fluoride(out). With respect to regulation, na(+) is not transported, but it plays an essential structural role and its presence is essential for fluoride channel function. Its function is as follows. Fluoride-specific ion channel. Important for reducing fluoride concentration in the cell, thus reducing its toxicity. The protein is Fluoride-specific ion channel FluC 1 of Corynebacterium diphtheriae (strain ATCC 700971 / NCTC 13129 / Biotype gravis).